We begin with the raw amino-acid sequence, 752 residues long: Two pore channel protein 2 (752 aa).

At 1–84 (MAEPQAESEP…RRYYSNVCQR (84 aa)) the chain is on the cytoplasmic side. Residues 85–105 (TLSFTIFLILFLAFIETPSSL) form a helical membrane-spanning segment. Residues 106-127 (TSTADVRYRAAPWEPPCGLTES) lie on the Extracellular side of the membrane. A helical transmembrane segment spans residues 128–148 (VEVLCLLVFAADLSVKGYLFG). Residues 149-155 (WAHFQKN) are Cytoplasmic-facing. The helical transmembrane segment at 156–176 (LWLLGYLVVLVVSLVDWTVSL) threads the bilayer. Topologically, residues 177-183 (SLVCHEP) are extracellular. The helical transmembrane segment at 184 to 204 (LRIRRLLRPFFLLQNSSMMKK) threads the bilayer. The tract at residues 203-207 (KKTLK) is interaction with phosphatidylinositol 3,5-bisphosphate. Over 205–218 (TLKCIRWSLPEMAS) the chain is Cytoplasmic. The chain crosses the membrane as a helical span at residues 219–239 (VGLLLAIHLCLFTMFGMLLFA). Residues 240 to 254 (GGKQDDGQDRERLTY) lie on the Extracellular side of the membrane. Positions 255–279 (FQNLPESLTSLLVLLTTANNPDVMI) form an intramembrane region, helical; Pore-forming. Residues 280-289 (PAYSKNRAYA) are Extracellular-facing. Residues 290-310 (IFFIVFTVIGSLFLMNLLTAI) traverse the membrane as a helical segment. At 311-436 (IYSQFRGYLM…FLFGHYYFDY (126 aa)) the chain is on the cytoplasmic side. A helical transmembrane segment spans residues 437–459 (LGNLIALANLVSICVFLVLDADV). Over 460–465 (LPAERD) the chain is Extracellular. Residues 466–486 (DFILGILNCVFIVYYLLEMLL) traverse the membrane as a helical segment. Topologically, residues 487 to 502 (KVFALGLRGYLSYPSN) are cytoplasmic. A helical membrane pass occupies residues 503–523 (VFDGLLTVVLLVLEISTLAVY). Residues 524–554 (RLPHPGWRPEMVGLLSLWDMTRMLNMLIVFR) lie on the Extracellular side of the membrane. The helical transmembrane segment at 555-575 (FLRIIPSMKLMAVVASTVLGL) threads the bilayer. Residues 576 to 580 (VQNMR) are Cytoplasmic-facing. The helical transmembrane segment at 581 to 601 (AFGGILVVVYYVFAIIGINLF) threads the bilayer. The Extracellular portion of the chain corresponds to 602-635 (RGVIVALPGNSSLAPANGSAPCGSFEQLEYWANN). Residues N611 and N618 are each glycosylated (N-linked (GlcNAc...) asparagine). Positions 636-658 (FDDFAAALVTLWNLMVVNNWQVF) form an intramembrane region, helical; Pore-forming. Topologically, residues 659–673 (LDAYRRYSGPWSKIY) are extracellular. The helical transmembrane segment at 674-694 (FVLWWLVSSVIWVNLFLALIL) threads the bilayer. The Cytoplasmic segment spans residues 695–752 (ENFLHKWDPRSHLQPLAGTPEATYQMTVELLFRDILEEPGEDELTERLSQHPHLWLCR).

This sequence belongs to the calcium channel alpha-1 subunit (TC 1.A.1.11) family. Two pore calcium channel subfamily. As to quaternary structure, homodimer. Interacts with LRRK2. Interacts with HAX1. Interacts with MTOR; the interaction is required for TPCN2 ATP sensitivity. Found in a complex with LSM12, TPCN1 and TPCN2. Interacts with LSM12. Post-translationally, N-glycosylated. In terms of tissue distribution, widely expressed. Expressed at high level in liver and kidney.

It localises to the late endosome membrane. The protein localises to the lysosome membrane. The protein resides in the melanosome membrane. It carries out the reaction Na(+)(in) = Na(+)(out). It catalyses the reaction Ca(2+)(in) = Ca(2+)(out). Its activity is regulated as follows. Regulated by Mg(2+) ions, cytosolic Mg(2+) selectively inhibits outward current while lysosomal Mg(2+) modestly inhibits both the outward and inward currents. In the absence of Mg(2+), NAADP readily activates TPCN2, with properties similar to PI(3,5)P2. Na(+) current is inhibited by ATP in a MTORC-dependent manner. ATP sensitivity is independent of PI(3,5)P2. Both current elicited by PI(3,5)P2 as well as NAADP are inhibited by tetrandrine. Its function is as follows. Intracellular channel initially characterized as a non-selective Ca(2+)-permeable channel activated by NAADP (nicotinic acid adenine dinucleotide phosphate), it is also a highly-selective Na(+) channel activated directly by PI(3,5)P2 (phosphatidylinositol 3,5-bisphosphate). Localizes to the lysosomal and late endosome membranes where it regulates organellar membrane excitability, membrane trafficking, and pH homeostasis. Is associated with a plethora of physiological processes, including mTOR-dependent nutrient sensing, skin pigmentation and autophagy. Ion selectivity is not fixed but rather agonist-dependent and under defined ionic conditions, can be readily activated by both NAADP and PI(3,5)P2. As calcium channel, it increases the pH in the lysosomal lumen, as sodium channel, it promotes lysosomal exocytosis. Plays a crucial role in endolysosomal trafficking in the endolysosomal degradation pathway and is potentially involved in the homeostatic control of many macromolecules and cell metabolites. Also expressed in melanosomes of pigmented cells where mediates a Ca(2+) channel and/or PI(3,5)P2-activated melanosomal Na(+) channel to acidify pH and inhibit tyrosinase activity required for melanogenesis and pigmentation. Unlike the voltage-dependent TPCN1, TPCN2 is voltage independent and can be activated solely by PI(3,5)P2 binding. In contrast, PI(4,5)P2, PI(3,4)P2, PI(3)P and PI(5)P have no obvious effect on channel activation. (Microbial infection) During Ebola virus (EBOV) infection, controls the movement of endosomes containing virus particles and is required by EBOV to escape from the endosomal network into the cell cytoplasm. Functionally, (Microbial infection) Required for cell entry of coronaviruses SARS-CoV and SARS-CoV-2, as well as human coronavirus EMC (HCoV-EMC), by endocytosis. The chain is Two pore channel protein 2 from Homo sapiens (Human).